Here is a 342-residue protein sequence, read N- to C-terminus: Methionine import ATP-binding protein MetN 2 (342 aa).

Residues 2–241 enclose the ABC transporter domain; it reads ISIEGLSKVF…PKQLVTRKFV (240 aa). 38–45 is an ATP binding site; that stretch reads GYSGAGKS.

It belongs to the ABC transporter superfamily. Methionine importer (TC 3.A.1.24) family. In terms of assembly, the complex is composed of two ATP-binding proteins (MetN), two transmembrane proteins (MetI) and a solute-binding protein (MetQ).

The protein localises to the cell membrane. It catalyses the reaction L-methionine(out) + ATP + H2O = L-methionine(in) + ADP + phosphate + H(+). The enzyme catalyses D-methionine(out) + ATP + H2O = D-methionine(in) + ADP + phosphate + H(+). Functionally, part of the ABC transporter complex MetNIQ involved in methionine import. Responsible for energy coupling to the transport system. This chain is Methionine import ATP-binding protein MetN 2, found in Oceanobacillus iheyensis (strain DSM 14371 / CIP 107618 / JCM 11309 / KCTC 3954 / HTE831).